Reading from the N-terminus, the 289-residue chain is MGNVNAREEANSNNASAVEDEDAEICSREAMSAASDGNHVAPPELMGQSPPHSPRATQSPLMFAPQVPVLPLQRPDEIHIPNPSWMQSPSSLYEEASNEQGIPTMITWCHGGKEIAVEGSWDNWKTRSRLQRSGKDFTIMKVLPSGVYEYRFIVDGQWRHAPELPLARDDAGNTFNILDLQDYVPEDIQSISGFEPPQSPENSYSNLLLGAEDYSKEPPVVPPHLQMTLLNLPAANPDIPSPLPRPQHVILNHLYMQKGKSGPSVVALGSTHRFLAKYVTVVLYKSLQR.

The segment covering 1 to 10 has biased composition (basic and acidic residues); the sequence is MGNVNAREEA. The segment at 1–59 is disordered; the sequence is MGNVNAREEANSNNASAVEDEDAEICSREAMSAASDGNHVAPPELMGQSPPHSPRATQS. Gly2 carries N-myristoyl glycine lipidation. The interval 103–180 is kinase-interacting sequence (KIS); the sequence is PTMITWCHGG…AGNTFNILDL (78 aa). An association with SNF1 complex (ASC) region spans residues 217–289; sequence EPPVVPPHLQ…TVVLYKSLQR (73 aa).

The protein belongs to the 5'-AMP-activated protein kinase beta subunit family. In terms of assembly, subunit of a probable heterotrimeric complex consisting of an alpha catalytic (KIN10 or KIN11) subunit, and a beta (KINB) and a gamma (KING or SNF4) non-catalytic regulatory subunits. Interacts with SNF4. Interacts with FLZ1, FLZ2, FLZ8, FLZ9, FLZ10, FLZ12, FLZ13 and FLZ14. Post-translationally, sumoylated. As to expression, expressed in leaves, stems, roots, flower buds and flowers. Not detectable in siliques.

It is found in the cell membrane. Regulatory subunit of the probable trimeric SNF1-related protein kinase (SnRK) complex, which may play a role in a signal transduction cascade regulating gene expression and carbohydrate metabolism in higher plants. The SnRK complex may also be involved in the regulation of fatty acid synthesis by phosphorylation of acetyl-CoA carboxylase and in assimilation of nitrogen by phosphorylating nitrate reductase. This Arabidopsis thaliana (Mouse-ear cress) protein is SNF1-related protein kinase regulatory subunit beta-2 (KINB2).